Consider the following 348-residue polypeptide: Succinylglutamate desuccinylase (348 aa).

Zn(2+)-binding residues include His67, Glu70, and His164. Residue Glu228 is part of the active site.

This sequence belongs to the AspA/AstE family. Succinylglutamate desuccinylase subfamily. Zn(2+) serves as cofactor.

It catalyses the reaction N-succinyl-L-glutamate + H2O = L-glutamate + succinate. The protein operates within amino-acid degradation; L-arginine degradation via AST pathway; L-glutamate and succinate from L-arginine: step 5/5. Its function is as follows. Transforms N(2)-succinylglutamate into succinate and glutamate. The polypeptide is Succinylglutamate desuccinylase (Shewanella denitrificans (strain OS217 / ATCC BAA-1090 / DSM 15013)).